A 386-amino-acid polypeptide reads, in one-letter code: MKTIILALALIALVSSTQSDVIDTIKKIDQSPFGRTLFDTIWLELQTGDPLDRLVSTLTDLEDRYVAEQKEDDAKNQEYQGACTVDITAFDKDLAESNRKKIELEARLEGQLYPQRSILEGLVAQKKAEVKGYQKDLDELDAQRAEEHEDFEEKVLEHQEATAIIAEARRLFADNIEHESFVQKGKAAKQPHKFTKDVANLIQKHFTTSAKKTAKFQHRKGYSKLFKAFATIASKVEQLADAGAVQKIIDLADELLAKISDSLSLLRFAEDKRVESYKKSRNFVVIALNVAGSALANAISDLAALNDIIAQVEASLDTTVQRIENVSADRHDRFTQCEEAVQDYSDARSARQSDRDVVSQTIGLVNKELRTLREQLALRQQAGEQI.

The N-terminal stretch at 1-19 (MKTIILALALIALVSSTQS) is a signal peptide. The propeptide occupies 20 to 48 (DVIDTIKKIDQSPFGRTLFDTIWLELQTG). Positions 51–154 (LDRLVSTLTD…AEEHEDFEEK (104 aa)) form a coiled coil. A propeptide spanning residues 184-238 (KGKAAKQPHKFTKDVANLIQKHFTTSAKKTAKFQHRKGYSKLFKAFATIASKVEQ) is cleaved from the precursor. Residues 294–325 (ALANAISDLAALNDIIAQVEASLDTTVQRIEN) are a coiled coil.

Belongs to the TMP family.

The protein resides in the trichocyst. Functionally, structural protein that crystallize inside the trichocyst matrix. The polypeptide is Trichocyst matrix protein T2-B (T2B) (Paramecium tetraurelia).